We begin with the raw amino-acid sequence, 227 residues long: Dephospho-CoA kinase (227 aa).

Residues 31-227 (KIGLTGGIGS…EKLFQFINCL (197 aa)) form the DPCK domain. 39–44 (GSGKST) contacts ATP.

This sequence belongs to the CoaE family.

It localises to the cytoplasm. It carries out the reaction 3'-dephospho-CoA + ATP = ADP + CoA + H(+). The protein operates within cofactor biosynthesis; coenzyme A biosynthesis; CoA from (R)-pantothenate: step 5/5. In terms of biological role, catalyzes the phosphorylation of the 3'-hydroxyl group of dephosphocoenzyme A to form coenzyme A. In Clostridium tetani (strain Massachusetts / E88), this protein is Dephospho-CoA kinase.